The sequence spans 481 residues: Proline--tRNA ligase (481 aa).

The protein belongs to the class-II aminoacyl-tRNA synthetase family. ProS type 3 subfamily. In terms of assembly, homodimer.

It localises to the cytoplasm. It catalyses the reaction tRNA(Pro) + L-proline + ATP = L-prolyl-tRNA(Pro) + AMP + diphosphate. Functionally, catalyzes the attachment of proline to tRNA(Pro) in a two-step reaction: proline is first activated by ATP to form Pro-AMP and then transferred to the acceptor end of tRNA(Pro). In Chlorobium phaeovibrioides (strain DSM 265 / 1930) (Prosthecochloris vibrioformis (strain DSM 265)), this protein is Proline--tRNA ligase.